Here is a 149-residue protein sequence, read N- to C-terminus: Natriuretic peptides A (149 aa).

A signal peptide spans 1–23 (MGSPIAASFLLFLAVQLLGQTGA). 2 consecutive propeptides follow at residues 24-121 (NPVY…AAPR) and 91-101 (DGGALGRSPWD). A disordered region spans residues 49–103 (MPLEDEAESPQALSEQNAEAGAALSPLPEVPPWTGEVSPAQRDGGALGRSPWDSS). The residue at position 127 (Ser-127) is a Phosphoserine. Cysteines 128 and 144 form a disulfide. The interval 145–149 (NSFRY) is important for degradation of atrial natriuretic peptide by IDE.

The protein belongs to the natriuretic peptide family. As to quaternary structure, homodimer; disulfide-linked antiparallel dimer. The precursor molecule is proteolytically cleaved by CORIN at Arg-121 to produce the atrial natriuretic peptide. Undergoes further proteolytic cleavage by unknown proteases to give rise to long-acting natriuretic peptide, vessel dilator and kaliuretic peptide. Additional processing gives rise to the auriculin and atriopeptin peptides. In the kidneys, alternative processing by an unknown protease results in the peptide urodilatin. In terms of processing, cleavage by MME initiates degradation of the factor and thereby regulates its activity. Degradation by IDE results in reduced activation of NPR1 (in vitro). During IDE degradation, the resulting products can temporarily stimulate NPR2 to produce cGMP, before the fragments are completely degraded and inactivated by IDE (in vitro). Post-translationally, degraded by IDE. Phosphorylation on Ser-127 decreases vasorelaxant activity.

Its subcellular location is the secreted. It is found in the perikaryon. The protein localises to the cell projection. Its function is as follows. Hormone that plays a key role in mediating cardio-renal homeostasis, and is involved in vascular remodeling and regulating energy metabolism. Acts by specifically binding and stimulating NPR1 to produce cGMP, which in turn activates effector proteins, such as PRKG1, that drive various biological responses. Regulates vasodilation, natriuresis, diuresis and aldosterone synthesis and is therefore essential for regulating blood pressure, controlling the extracellular fluid volume and maintaining the fluid-electrolyte balance. Also involved in inhibiting cardiac remodeling and cardiac hypertrophy by inducing cardiomyocyte apoptosis and attenuating the growth of cardiomyocytes and fibroblasts. Plays a role in female pregnancy by promoting trophoblast invasion and spiral artery remodeling in uterus, and thus prevents pregnancy-induced hypertension. In adipose tissue, acts in various cGMP- and PKG-dependent pathways to regulate lipid metabolism and energy homeostasis. This includes up-regulating lipid metabolism and mitochondrial oxygen utilization by activating the AMP-activated protein kinase (AMPK), and increasing energy expenditure by acting via MAPK11 to promote the UCP1-dependent thermogenesis of brown adipose tissue. Binds the clearance receptor NPR3 which removes the hormone from circulation. May have a role in cardio-renal homeostasis through regulation of natriuresis, diuresis, vasodilation, and inhibiting aldosterone synthesis. In vitro, promotes the production of cGMP and induces vasodilation. May promote natriuresis, at least in part, by enhancing prostaglandin E2 synthesis resulting in the inhibition of renal Na+-K+-ATPase. However reports on the involvement of this peptide in mammal blood volume and blood pressure homeostasis are conflicting; according to a report, in vivo it is not sufficient to activate cGMP and does not inhibit collecting duct transport nor effect diuresis and natriuresis. Appears to bind to specific receptors that are distinct from the receptors bound by atrial natriuretic peptide and vessel dilator. Possibly enhances protein excretion in urine by decreasing proximal tubular protein reabsorption. Functionally, may have a role in cardio-renal homeostasis through regulation of natriuresis, diuresis, and vasodilation. In vitro, promotes the production of cGMP and induces vasodilation. May promote natriuresis, at least in part, by enhancing prostaglandin E2 synthesis resulting in the inhibition of renal Na+-K+-ATPase. However reports on the involvement of this peptide in mammal blood volume and blood pressure homeostasis are conflicting; according to a report it is not sufficient to activate cGMP and does not inhibit collecting duct transport nor effect diuresis and natriuresis. Appears to bind to specific receptors that are distinct from the receptors bound by the atrial natriuretic and long-acting natriuretic peptides. Possibly functions in protein excretion in urine by maintaining the integrity of the proximal tubules and enhancing protein excretion by decreasing proximal tubular protein reabsorption. In terms of biological role, may have a role in cardio-renal homeostasis through regulation of diuresis and inhibiting aldosterone synthesis. In vitro, promotes the production of cGMP and induces vasodilation. May promote natriuresis, at least in part, by enhancing prostaglandin E2 synthesis resulting in the inhibition of renal Na+-K+-ATPase. May have a role in potassium excretion but not sodium excretion (natriuresis). Possibly enhances protein excretion in urine by decreasing proximal tubular protein reabsorption. Its function is as follows. Hormone produced in the kidneys that appears to be important for maintaining cardio-renal homeostasis. Mediates vasodilation, natriuresis and diuresis primarily in the renal system, in order to maintain the extracellular fluid volume and control the fluid-electrolyte balance. Specifically binds and stimulates cGMP production by renal transmembrane receptors, likely NPR1. Urodilatin not ANP, may be the natriuretic peptide responsible for the regulation of sodium and water homeostasis in the kidney. May have a role in cardio-renal homeostasis through regulation of natriuresis and vasodilation. In vivo promotes natriuresis and in vitro, vasodilates renal artery strips. Functionally, may have a role in cardio-renal homeostasis through regulation of regulation of natriuresis and vasodilation. In vivo promotes natriuresis. In vitro, vasodilates intestinal smooth muscle but not smooth muscle strips. In terms of biological role, may have a role in cardio-renal homeostasis through regulation of natriuresis and vasodilation. In vivo promotes natriuresis. In vitro, selectively vasodilates intestinal and vascular smooth muscle strips. Its function is as follows. May have a role in cardio-renal homeostasis through regulation of natriuresis and vasodilation. In vivo promotes natriuresis. In vitro, selectively vasodilates intestinal smooth muscle but not vascular smooth muscle strips. This Canis lupus familiaris (Dog) protein is Natriuretic peptides A (NPPA).